Reading from the N-terminus, the 1011-residue chain is Rap guanine nucleotide exchange factor 4 (1011 aa).

A DEP domain is found at 216-291 (SRAPHMIRDR…DKYLFYRFLD (76 aa)). 3',5'-cyclic AMP contacts are provided by residues 422–425 (GKLA) and 432–433 (RA). The N-terminal Ras-GEF domain occupies 496–634 (QKYTVMSGTP…ELEKIVKQIS (139 aa)). In terms of domain architecture, Ras-GEF spans 772 to 1009 (SSKDLAYQMT…SQMSHRLEPR (238 aa)).

In terms of assembly, interacts with RAP1B, RIMS1 and RIMS2. Probably part of a complex with RIMS2 and GTP-activated RAB3A. In terms of tissue distribution, expressed in cerebellum, pituitary, adrenal gland and liver.

It localises to the cytoplasm. Its subcellular location is the membrane. Functionally, guanine nucleotide exchange factor (GEF) for RAP1A, RAP1B and RAP2A small GTPases that is activated by binding cAMP. Seems not to activate RAB3A. Involved in cAMP-dependent, PKA-independent exocytosis through interaction with RIMS2. In Mus musculus (Mouse), this protein is Rap guanine nucleotide exchange factor 4 (Rapgef4).